We begin with the raw amino-acid sequence, 68 residues long: MLFIPPPLLCLFIAIAMYFLPKIASYSVHFSVIVFVISLSFLIALSSVMQSLYVKPPLILVTLKAQQN.

2 helical membrane passes run 1–21 (MLFI…YFLP) and 28–48 (VHFS…LSSV).

It is found in the cell membrane. This is an uncharacterized protein from Haemophilus influenzae (strain ATCC 51907 / DSM 11121 / KW20 / Rd).